Reading from the N-terminus, the 224-residue chain is Phosphoribosylformylglycinamidine synthase subunit PurQ (224 aa).

One can recognise a Glutamine amidotransferase type-1 domain in the interval 3–224 (FGVVVFPGSN…GLLEKVVALA (222 aa)). Catalysis depends on Cys86, which acts as the Nucleophile. Residues His195 and Glu197 contribute to the active site.

As to quaternary structure, part of the FGAM synthase complex composed of 1 PurL, 1 PurQ and 2 PurS subunits.

It localises to the cytoplasm. The catalysed reaction is N(2)-formyl-N(1)-(5-phospho-beta-D-ribosyl)glycinamide + L-glutamine + ATP + H2O = 2-formamido-N(1)-(5-O-phospho-beta-D-ribosyl)acetamidine + L-glutamate + ADP + phosphate + H(+). The enzyme catalyses L-glutamine + H2O = L-glutamate + NH4(+). It functions in the pathway purine metabolism; IMP biosynthesis via de novo pathway; 5-amino-1-(5-phospho-D-ribosyl)imidazole from N(2)-formyl-N(1)-(5-phospho-D-ribosyl)glycinamide: step 1/2. Part of the phosphoribosylformylglycinamidine synthase complex involved in the purines biosynthetic pathway. Catalyzes the ATP-dependent conversion of formylglycinamide ribonucleotide (FGAR) and glutamine to yield formylglycinamidine ribonucleotide (FGAM) and glutamate. The FGAM synthase complex is composed of three subunits. PurQ produces an ammonia molecule by converting glutamine to glutamate. PurL transfers the ammonia molecule to FGAR to form FGAM in an ATP-dependent manner. PurS interacts with PurQ and PurL and is thought to assist in the transfer of the ammonia molecule from PurQ to PurL. The polypeptide is Phosphoribosylformylglycinamidine synthase subunit PurQ (Trichormus variabilis (strain ATCC 29413 / PCC 7937) (Anabaena variabilis)).